Reading from the N-terminus, the 121-residue chain is ATP synthase epsilon chain (121 aa).

Belongs to the ATPase epsilon chain family. F-type ATPases have 2 components, CF(1) - the catalytic core - and CF(0) - the membrane proton channel. CF(1) has five subunits: alpha(3), beta(3), gamma(1), delta(1), epsilon(1). CF(0) has three main subunits: a, b and c.

The protein localises to the cell membrane. Produces ATP from ADP in the presence of a proton gradient across the membrane. In Mycobacterium sp. (strain JLS), this protein is ATP synthase epsilon chain.